We begin with the raw amino-acid sequence, 204 residues long: Spermatogenesis-associated protein 46 (204 aa).

Residues 101–120 (SSSSQENTYPREANRKSKHG) are disordered.

Testis-specific.

It localises to the nucleus membrane. Plays a role in spermiogenesis and fertilization. The protein is Spermatogenesis-associated protein 46 (Spata46) of Mus musculus (Mouse).